A 206-amino-acid chain; its full sequence is MATITIYDQTKKEVGSMDLAPEVFEVPVKPEILHLVVRSQLAAKRQGTHATKTRGMKRGGGAKPWRQKGTGRARAGSTRSPLWRGGGTTFGPQPRDYSFKVNKKVRRLALKMALTSRLSEEKMMVVKNIDLPEIKTKLFVEVAEALGLEKALVVVKDADNKLLLSARNIPGIKLITADQLNVYDILKARQLVMLENAAQDLQERLK.

A disordered region spans residues 44 to 87; sequence KRQGTHATKTRGMKRGGGAKPWRQKGTGRARAGSTRSPLWRGGG.

Belongs to the universal ribosomal protein uL4 family. Part of the 50S ribosomal subunit.

In terms of biological role, one of the primary rRNA binding proteins, this protein initially binds near the 5'-end of the 23S rRNA. It is important during the early stages of 50S assembly. It makes multiple contacts with different domains of the 23S rRNA in the assembled 50S subunit and ribosome. Its function is as follows. Forms part of the polypeptide exit tunnel. In Maridesulfovibrio salexigens (strain ATCC 14822 / DSM 2638 / NCIMB 8403 / VKM B-1763) (Desulfovibrio salexigens), this protein is Large ribosomal subunit protein uL4.